Consider the following 927-residue polypeptide: UPF0182 protein bll7333 (927 aa).

7 helical membrane-spanning segments follow: residues 17–37 (AVVG…LLAL), 65–85 (AVVF…NGWL), 134–154 (LALL…QFVY), 185–205 (WMML…LVHG), 220–240 (VIAH…WSFG), 264–284 (VGLP…LAAW), and 297–317 (AAFL…PVLF).

Belongs to the UPF0182 family.

It localises to the cell membrane. The chain is UPF0182 protein bll7333 from Bradyrhizobium diazoefficiens (strain JCM 10833 / BCRC 13528 / IAM 13628 / NBRC 14792 / USDA 110).